Consider the following 327-residue polypeptide: Aldo-keto reductase FVEG_12638 (327 aa).

Residue Asp51 participates in NADP(+) binding. The Proton donor role is filled by Tyr56. His122 lines the substrate pocket. Residues 152-153 (SE), 202-212 (GPLGHGWLVED), and 286-294 (ENFTSRDIE) contribute to the NADP(+) site.

Belongs to the aldo/keto reductase family. Aldo/keto reductase 2 subfamily.

Its function is as follows. Aldo-keto reductase; part of the Fusarium detoxification of benzoxazolinone cluster 2 (FDB2) involved in the degradation of benzoxazolinones produced by the host plant. Maize, wheat, and rye produce the 2 benzoxazinone phytoanticipins 2,4-dihy-droxy-7-methoxy-1,4-benzoxazin-3-one (DIMBOA) and 2,4-dihydroxy-1,4-benzoxazin-3-one (DIBOA) that, due to their inherent instability once released, spontaneously degrade to the more stable corresponding benzoxazolinones, 6-methoxy-2-benzoxazolinone (MBOA) and 2-benzoxazolinone (BOA), respectively. The first step in the detoxification of benzoxazolinones involves the hydrolysis of the cyclic ester bond of benzoxazolinones by the FDB1 cluster gamma-lactamase MBL1 to aminophenols. MBL1 is able to convert BOA into 2-aminophenol (2-AP), as well as MBOA into 5-methoxy-2-aminophenol (2-AMP). The FDB2 cluster N-malonyltransferase FDB2/NAT1 then metabolizes aminophenols via N-malonylation to non-toxic malonamic acids. FDB2/NAT1 converts 2-AP into N-(2-hydroxyphenyl) malonamic acid (HPMA) and 2-AMP into N-(2-hydroxy-4-methoxyphenyl) malonamic acid (HMPMA). The duplicated dienlactone hydrolases DLH1 and DLH2 may provide redundant function for hydrolyzing the lactone moiety in the BOA molecule. The roles of the amidases an other enzymes encoded by the 2 FDB clusters have not been identified so far. The sequence is that of Aldo-keto reductase FVEG_12638 from Gibberella moniliformis (strain M3125 / FGSC 7600) (Maize ear and stalk rot fungus).